The following is a 273-amino-acid chain: Medium-wave-sensitive opsin 1 (273 aa).

The Extracellular portion of the chain corresponds to 1–5 (APRWV). The helical transmembrane segment at 6-30 (YHLTSAWMVFVVIASVFTNGLVLAA) threads the bilayer. Residues 31-42 (TMRFKKLRHPLN) lie on the Cytoplasmic side of the membrane. Residues 43 to 68 (WILVNLAIADLVETIIASTISVVNQM) traverse the membrane as a helical segment. Residues 69 to 82 (YGYFVLGHPLCVVE) lie on the Extracellular side of the membrane. A disulfide bridge links Cys-79 with Cys-156. The chain crosses the membrane as a helical span at residues 83-102 (GYTASLCGITGLWSLAIISW). The Cytoplasmic portion of the chain corresponds to 103-121 (ERWMVVCRPFGNVRFDAKL). A helical transmembrane segment spans residues 122 to 145 (AIAGIAFSWIWAAVWTAPPIFGWS). Over 146–171 (RYWPHGLKTSCGPDVFSGSSYPGVQS) the chain is Extracellular. A helical transmembrane segment spans residues 172–199 (YMIVLMITCCFIPLSVIVLCYLQVWLAI). Residues 200–221 (RAVAKQQKESESTQKAEKEVTR) lie on the Cytoplasmic side of the membrane. Residues 222–245 (MVMVMIFAFCLCWGPYAFFACFAA) form a helical membrane-spanning segment. Over 246–253 (AHPGYAFH) the chain is Extracellular. Residues 254–273 (PLVAALPAYFAKSATIYNPI) traverse the membrane as a helical segment. Lys-265 is modified (N6-(retinylidene)lysine).

Belongs to the G-protein coupled receptor 1 family. Opsin subfamily. Monomer. Homodimer. Homotetramer. O-glycosylated. Post-translationally, phosphorylated on some or all of the serine and threonine residues present in the C-terminal region. The three color pigments are found in the cone photoreceptor cells.

The protein localises to the membrane. Functionally, visual pigments are the light-absorbing molecules that mediate vision. They consist of an apoprotein, opsin, covalently linked to cis-retinal. This Odocoileus virginianus virginianus (Virginia white-tailed deer) protein is Medium-wave-sensitive opsin 1 (OPN1MW).